The chain runs to 369 residues: 3-dehydroquinate synthase (369 aa).

NAD(+) contacts are provided by residues 75–80 (DGEEHK), 109–113 (GVIGD), 133–134 (TT), Lys-146, Lys-155, and 173–176 (TLKT). Positions 188, 251, and 268 each coordinate Zn(2+).

Belongs to the sugar phosphate cyclases superfamily. Dehydroquinate synthase family. It depends on Co(2+) as a cofactor. Zn(2+) is required as a cofactor. The cofactor is NAD(+).

The protein localises to the cytoplasm. The enzyme catalyses 7-phospho-2-dehydro-3-deoxy-D-arabino-heptonate = 3-dehydroquinate + phosphate. It participates in metabolic intermediate biosynthesis; chorismate biosynthesis; chorismate from D-erythrose 4-phosphate and phosphoenolpyruvate: step 2/7. Catalyzes the conversion of 3-deoxy-D-arabino-heptulosonate 7-phosphate (DAHP) to dehydroquinate (DHQ). The protein is 3-dehydroquinate synthase of Legionella pneumophila (strain Lens).